Here is a 477-residue protein sequence, read N- to C-terminus: UDP-sulfoquinovose synthase, chloroplastic (477 aa).

The disordered stretch occupies residues 1 to 21; sequence MAHLLSASCPSVISLSSSSSK. The transit peptide at 1-86 directs the protein to the chloroplast; it reads MAHLLSASCP…TNNSSSKPKR (86 aa). NAD(+) contacts are provided by residues 95-96, 115-119, 158-159, Arg-184, and Asn-202; these read YC, DNLVR, and DI. Residue Arg-184 coordinates substrate. Residues Thr-228 and Tyr-265 each contribute to the substrate site. The active site involves Thr-228. Tyr-265 and Lys-269 together coordinate NAD(+). Tyr-265 acts as the Proton acceptor in catalysis. The active site involves Lys-269. Residue Gln-292 coordinates substrate. An NAD(+)-binding site is contributed by Val-295. Substrate contacts are provided by residues 322–325, 337–339, and 410–412; these read ALNR, TVY, and RVE.

Belongs to the NAD(P)-dependent epimerase/dehydratase family. Homodimer. The cofactor is NAD(+).

It localises to the plastid. The protein localises to the chloroplast. The catalysed reaction is sulfite + UDP-alpha-D-glucose + H(+) = UDP-alpha-D-6-sulfoquinovose + H2O. Concentrations above 100 uM sulfite inhibit the reaction. Involved in the biosynthesis of sulfolipids found in thylakoid membranes. Converts UDP-glucose and sulfite to the sulfolipid head group precursor UDP-sulfoquinovose. The chain is UDP-sulfoquinovose synthase, chloroplastic (SQD1) from Arabidopsis thaliana (Mouse-ear cress).